A 251-amino-acid polypeptide reads, in one-letter code: Probable transcriptional regulatory protein SYNPCC7002_A0851 (251 aa).

Positions 20 to 141 constitute a Response regulatory domain; sequence RILVVEDEAV…ELVARCRALL (122 aa). A 4-aspartylphosphate modification is found at Asp-76. Positions 153–251 form a DNA-binding region, ompR/PhoB-type; it reads NSVRQFKDIS…TVRGFGYRFG (99 aa).

Post-translationally, phosphorylation.

This Picosynechococcus sp. (strain ATCC 27264 / PCC 7002 / PR-6) (Agmenellum quadruplicatum) protein is Probable transcriptional regulatory protein SYNPCC7002_A0851.